Here is a 205-residue protein sequence, read N- to C-terminus: NADH-ubiquinone oxidoreductase chain 6 (205 aa).

A run of 3 helical transmembrane segments spans residues 48–68 (FFAM…FLFV), 86–106 (YLPV…FILD), and 150–170 (VWFL…IVLT).

The protein belongs to the complex I subunit 6 family. As to quaternary structure, complex I is composed of about 45 different subunits.

The protein resides in the mitochondrion membrane. The enzyme catalyses a ubiquinone + NADH + 5 H(+)(in) = a ubiquinol + NAD(+) + 4 H(+)(out). Functionally, core subunit of the mitochondrial membrane respiratory chain NADH dehydrogenase (Complex I) that is believed to belong to the minimal assembly required for catalysis. Complex I functions in the transfer of electrons from NADH to the respiratory chain. The immediate electron acceptor for the enzyme is believed to be ubiquinone. This Brassica campestris (Field mustard) protein is NADH-ubiquinone oxidoreductase chain 6 (ND6).